A 426-amino-acid polypeptide reads, in one-letter code: Serine--tRNA ligase (426 aa).

233 to 235 (TAE) lines the L-serine pocket. ATP is bound at residue 264–266 (RSE). Glu287 serves as a coordination point for L-serine. Position 351-354 (351-354 (EISS)) interacts with ATP. Ser387 serves as a coordination point for L-serine.

The protein belongs to the class-II aminoacyl-tRNA synthetase family. Type-1 seryl-tRNA synthetase subfamily. Homodimer. The tRNA molecule binds across the dimer.

The protein localises to the cytoplasm. It catalyses the reaction tRNA(Ser) + L-serine + ATP = L-seryl-tRNA(Ser) + AMP + diphosphate + H(+). The enzyme catalyses tRNA(Sec) + L-serine + ATP = L-seryl-tRNA(Sec) + AMP + diphosphate + H(+). It functions in the pathway aminoacyl-tRNA biosynthesis; selenocysteinyl-tRNA(Sec) biosynthesis; L-seryl-tRNA(Sec) from L-serine and tRNA(Sec): step 1/1. Catalyzes the attachment of serine to tRNA(Ser). Is also able to aminoacylate tRNA(Sec) with serine, to form the misacylated tRNA L-seryl-tRNA(Sec), which will be further converted into selenocysteinyl-tRNA(Sec). This chain is Serine--tRNA ligase, found in Pseudomonas putida (strain ATCC 700007 / DSM 6899 / JCM 31910 / BCRC 17059 / LMG 24140 / F1).